Consider the following 513-residue polypeptide: Dentin matrix acidic phosphoprotein 1 (513 aa).

Residues 1-16 (MKISILLMFLWGLSCA) form the signal peptide. Residues 23-513 (QNNESEDSEE…QDDNDCQDGY (491 aa)) form a disordered region. N-linked (GlcNAc...) asparagine glycosylation occurs at N25. Residues 46 to 60 (ESSESSEGSKVSSEE) are compositionally biased toward low complexity. Residues 101 to 119 (DKDDDEDDSGDDTFGDDDS) show a composition bias toward acidic residues. Polar residues predominate over residues 143–162 (TIQASEESAPQGQDSAQDTT). The span at 163 to 180 (SESRELDNEDRVDSKPEG) shows a compositional bias: basic and acidic residues. Acidic residues predominate over residues 208–220 (SELDDEGMQSDDP). Polar residues predominate over residues 245 to 257 (NSEQANTQDSGGS). A compositionally biased stretch (acidic residues) spans 275–287 (EEDDRSELDDNNT). N-linked (GlcNAc...) asparagine glycosylation is present at N285. Residues 296–307 (TENSNSRDTGLS) show a composition bias toward polar residues. The span at 309–325 (PRRDSKGDSQEDSKENL) shows a compositional bias: basic and acidic residues. Residues N324, N345, and N351 are each glycosylated (N-linked (GlcNAc...) asparagine). Residues 337–354 (SSESSQEANLSSQENSSE) show a composition bias toward low complexity. Residues 364-366 (RGD) carry the Cell attachment site motif. The span at 376–386 (EDQEDSDSSEE) shows a compositional bias: acidic residues. N-linked (GlcNAc...) asparagine glycans are attached at residues N413 and N426. Positions 417-426 (ESPESPEDEN) are enriched in acidic residues. A compositionally biased stretch (low complexity) spans 427-442 (SSSQEGLQSHSSSAES). A glycan (N-linked (GlcNAc...) asparagine) is linked at N467. Basic and acidic residues predominate over residues 484–502 (IEIESRKLTVDAYHNKPIG). The span at 503-513 (DQDDNDCQDGY) shows a compositional bias: acidic residues.

As to quaternary structure, interacts with importin alpha. Phosphorylated in the cytosol and extracellular matrix and unphosphorylated in the nucleus. Phosphorylation is necessary for nucleocytoplasmic transport and may be catalyzed by a nuclear isoform of CK2 and can be augmented by calcium. Phosphorylated (in vitro) by FAM20C in the extracellular medium at sites within the S-x-E/pS motif. Expressed in tooth particularly in odontoblast, ameloblast and cementoblast.

Its subcellular location is the nucleus. It is found in the cytoplasm. It localises to the secreted. The protein localises to the extracellular space. The protein resides in the extracellular matrix. Functionally, may have a dual function during osteoblast differentiation. In the nucleus of undifferentiated osteoblasts, unphosphorylated form acts as a transcriptional component for activation of osteoblast-specific genes like osteocalcin. During the osteoblast to osteocyte transition phase it is phosphorylated and exported into the extracellular matrix, where it regulates nucleation of hydroxyapatite. This is Dentin matrix acidic phosphoprotein 1 (DMP1) from Homo sapiens (Human).